We begin with the raw amino-acid sequence, 437 residues long: Transcription factor E2F1 (437 aa).

Disordered regions lie at residues 42 to 87 and 101 to 128; these read ASAP…GRPP and LAESSGPARGRGRHPGKGVKSPGEKSRY. The cyclin A:CDK2 binding stretch occupies residues 67-108; it reads ATPQAPRPTPSAPRPALGRPPVKRRLDLETDHQYLAESSGPA. The tract at residues 89–191 is interaction with BIRC2/c-IAP1; that stretch reads KRRLDLETDH…KKSKNHIQWL (103 aa). The DNA-binding element occupies 110-194; that stretch reads GRGRHPGKGV…KNHIQWLGSH (85 aa). Residues lysine 117, lysine 120, and lysine 125 each carry the N6-acetyllysine modification. Residues 153–174 form a leucine-zipper region; sequence LNWAAEVLKVQKRRIYDITNVL. The DEF box motif lies at 158-194; sequence EVLKVQKRRIYDITNVLEGIQLIAKKSKNHIQWLGSH. An N6-methyllysine; by SETD7 modification is found at lysine 185. The required for interaction with TRIM28 stretch occupies residues 192–382; the sequence is GSHTTVGVGG…RLSPLVAADS (191 aa). Residues 195-284 are dimerization; the sequence is TTVGVGGRLE…AVDSSENFQI (90 aa). The tract at residues 300–349 is disordered; the sequence is EETVGGISPGKTPSQEVTSEEENRATDSATIVSPPPSSPPSSLTTDPSQS. The span at 339-349 shows a compositional bias: low complexity; the sequence is PSSLTTDPSQS. At serine 364 the chain carries Phosphoserine; by CHEK2. The segment at 368 to 437 is transactivation; that stretch reads PVDEDRLSPL…DFGDLTPLDF (70 aa). At serine 375 the chain carries Phosphoserine. Serine 403 is subject to Phosphoserine; by GSK3-beta. The interval 409-426 is RB1 binding; sequence LDYHFGLEEGEGIRDLFD. Phosphothreonine; by GSK3-beta is present on threonine 433.

Belongs to the E2F/DP family. In terms of assembly, component of the DRTF1/E2F transcription factor complex. Forms heterodimers with DP family members. The E2F1 complex binds specifically hypophosphorylated RB1, the interaction represses E2F1-driven transcription. During the cell cycle, RB1 becomes phosphorylated in mid-to-late G1 phase, detaches from the DRTF1/E2F complex, rendering E2F transcriptionally active. Viral oncoproteins, notably E1A, T-antigen and HPV E7, are capable of sequestering RB1, thus releasing the active complex. Interacts with TRRAP, which probably mediates its interaction with histone acetyltransferase complexes, leading to transcription activation. Binds TOPBP1 and EAPP. Interacts with ARID3A. Interacts with TRIM28; the interaction inhibits E2F1 acetylation through recruiting HDAC1 and represses its transcriptional activity. Interaction with KAT2B; the interaction acetylates E2F1 enhancing its DNA-binding and transcriptional activity. Interacts with BIRC2/c-IAP1 (via BIR domains). The complex TFDP1:E2F1 interacts with CEBPA; the interaction prevents CEBPA binding to target genes promoters and represses its transcriptional activity. Interacts with RRP1B. Interacts with HCFC1. Interacts with KMT2E; the interaction is probably indirect and is mediated via HCFC1. Interacts with DCAF5 and L3MBTL3; the interaction requires methylation at Lys-185 and is necessary to target E2F1 for ubiquitination by the CRL4-DCAF5 E3 ubiquitin ligase complex. As to quaternary structure, (Microbial infection) Interacts with human cytomegalovirus/HHV-5 protein UL123. In terms of processing, phosphorylated by CDK2 and cyclin A-CDK2 in the S-phase. Phosphorylation at Ser-364 by CHEK2 stabilizes E2F1 upon DNA damage and regulates its effect on transcription and apoptosis. Phosphorylation at Ser-403 by GSK3B promotes interaction with USP11, leading to its deubiquitination and stabilization. Post-translationally, ubiquitinated via 'Lys-63'-linked ubiquitin, leading to its degradation. Deubiquitinated by USP11 following phosphorylation by GSK3B, promoting its stability. Acetylation stimulates DNA-binding. Enhanced under stress conditions such as DNA damage and inhibited by retinoblastoma protein RB1. Regulated by KAP1/TRIM28 which recruits HDAC1 to E2F1 resulting in deacetylation. Acetylated by P/CAF/KAT2B. In terms of processing, methylation at Lys-185 by SETD7 promotes E2F1 ubiquitin-dependent proteasomal degradation.

It localises to the nucleus. Its activity is regulated as follows. BIRC2/c-IAP1 stimulates its transcriptional activity. Transcription activator that binds DNA cooperatively with DP proteins through the E2 recognition site, 5'-TTTC[CG]CGC-3' found in the promoter region of a number of genes whose products are involved in cell cycle regulation or in DNA replication. The DRTF1/E2F complex functions in the control of cell-cycle progression from G1 to S phase. E2F1 binds preferentially RB1 in a cell-cycle dependent manner. It can mediate both cell proliferation and TP53/p53-dependent apoptosis. Blocks adipocyte differentiation by binding to specific promoters repressing CEBPA binding to its target gene promoters. Directly activates transcription of PEG10. Positively regulates transcription of RRP1B. This is Transcription factor E2F1 from Homo sapiens (Human).